Consider the following 336-residue polypeptide: N-acetyl-gamma-glutamyl-phosphate reductase (336 aa).

Residue Cys143 is part of the active site.

The protein belongs to the NAGSA dehydrogenase family. Type 1 subfamily.

It is found in the cytoplasm. The enzyme catalyses N-acetyl-L-glutamate 5-semialdehyde + phosphate + NADP(+) = N-acetyl-L-glutamyl 5-phosphate + NADPH + H(+). It functions in the pathway amino-acid biosynthesis; L-arginine biosynthesis; N(2)-acetyl-L-ornithine from L-glutamate: step 3/4. Catalyzes the NADPH-dependent reduction of N-acetyl-5-glutamyl phosphate to yield N-acetyl-L-glutamate 5-semialdehyde. In Dictyoglomus thermophilum (strain ATCC 35947 / DSM 3960 / H-6-12), this protein is N-acetyl-gamma-glutamyl-phosphate reductase.